Reading from the N-terminus, the 108-residue chain is Thioredoxin Asp f 28 (108 aa).

The Thioredoxin domain occupies 1-108 (MSHGKVIAVD…LEEMIKSISA (108 aa)). Active-site nucleophile residues include Cys33 and Cys36. A disulfide bridge connects residues Cys33 and Cys36.

This sequence belongs to the thioredoxin family.

Its function is as follows. Participates in various redox reactions through the reversible oxidation of its active center dithiol to a disulfide and catalyzes dithiol-disulfide exchange reactions. This is Thioredoxin Asp f 28 from Aspergillus fumigatus (Neosartorya fumigata).